Reading from the N-terminus, the 161-residue chain is DNA endonuclease I-CvuI (161 aa).

Belongs to the LAGLIDADG endonuclease family.

The protein localises to the plastid. The protein resides in the chloroplast. In terms of biological role, probable endonuclease involved in intron homing. The chain is DNA endonuclease I-CvuI from Chlorella vulgaris (Green alga).